A 261-amino-acid chain; its full sequence is tRNA pseudouridine synthase A (261 aa).

The active-site Nucleophile is the aspartate 51. Tyrosine 109 provides a ligand contact to substrate.

The protein belongs to the tRNA pseudouridine synthase TruA family. In terms of assembly, homodimer.

It carries out the reaction uridine(38/39/40) in tRNA = pseudouridine(38/39/40) in tRNA. Formation of pseudouridine at positions 38, 39 and 40 in the anticodon stem and loop of transfer RNAs. In Shewanella pealeana (strain ATCC 700345 / ANG-SQ1), this protein is tRNA pseudouridine synthase A.